A 166-amino-acid polypeptide reads, in one-letter code: Bud site selection protein 20 (166 aa).

The Nuclear localization signal signature appears at 7 to 16 (KRYKTKRRTR). A nuclear export signal-like (NES-like) region spans residues 17–31 (DLDLIYNDLSTKESV). A C2H2-type zinc finger spans residues 49-73 (HYCIHCAKYMETAIALKTHLKGKVH).

It belongs to the ZNF593/BUD20 C2H2-type zinc-finger protein family. As to quaternary structure, associates with pre-60S ribosomal particles; released from the pre-60S particle very early in the cytoplasm.

The protein localises to the nucleus. It localises to the cytoplasm. Its function is as follows. Involved in pre-60S ribosomal particles maturation by promoting the nuclear export of the 60S ribosome. Involved in positioning the proximal bud pole signal. The protein is Bud site selection protein 20 of Saccharomyces cerevisiae (strain ATCC 204508 / S288c) (Baker's yeast).